Reading from the N-terminus, the 296-residue chain is 5,10-methylenetetrahydrofolate reductase (296 aa).

Glu-28 functions as the Proton donor/acceptor in the catalytic mechanism. Thr-59 contributes to the NADH binding site. The FAD site is built by Tyr-60, Ala-62, His-88, Arg-118, Gly-119, Asp-120, Ala-132, Tyr-152, His-156, Ala-159, Asp-165, Asn-168, Arg-171, and Lys-172. Residue Asp-120 participates in (6S)-5-methyl-5,6,7,8-tetrahydrofolate binding. Gln-183 lines the NADH pocket. Residues Gln-183, Gln-219, and Arg-279 each coordinate (6S)-5-methyl-5,6,7,8-tetrahydrofolate.

This sequence belongs to the methylenetetrahydrofolate reductase family. Requires FAD as cofactor.

It carries out the reaction (6S)-5-methyl-5,6,7,8-tetrahydrofolate + NAD(+) = (6R)-5,10-methylene-5,6,7,8-tetrahydrofolate + NADH + H(+). It participates in one-carbon metabolism; tetrahydrofolate interconversion. It functions in the pathway amino-acid biosynthesis; L-methionine biosynthesis via de novo pathway. Functionally, catalyzes the NADH-dependent reduction of 5,10-methylenetetrahydrofolate to 5-methyltetrahydrofolate. Is required to provide the methyl group necessary for methionine synthetase to convert homocysteine to methionine; the methyl group is given by 5-methyltetrahydrofolate. This chain is 5,10-methylenetetrahydrofolate reductase (metF), found in Salmonella typhimurium (strain LT2 / SGSC1412 / ATCC 700720).